The sequence spans 340 residues: Alcohol dehydrogenase (340 aa).

Positions 37, 58, 89, 92, 95, 103, and 145 each coordinate Zn(2+).

It belongs to the zinc-containing alcohol dehydrogenase family. Zn(2+) serves as cofactor.

It catalyses the reaction a primary alcohol + NAD(+) = an aldehyde + NADH + H(+). It carries out the reaction a secondary alcohol + NAD(+) = a ketone + NADH + H(+). The chain is Alcohol dehydrogenase (adh) from Staphylococcus epidermidis (strain ATCC 12228 / FDA PCI 1200).